The sequence spans 424 residues: Tyrosine--tRNA ligase (424 aa).

Position 33 (tyrosine 33) interacts with L-tyrosine. The 'HIGH' region signature appears at 38–47 (PSADSLHIGH). L-tyrosine-binding residues include tyrosine 170 and glutamine 174. The 'KMSKS' region motif lies at 230–234 (KFGKT). Residue lysine 233 participates in ATP binding. In terms of domain architecture, S4 RNA-binding spans 357–424 (MSLIDALVRC…RRHYHLIRLV (68 aa)).

The protein belongs to the class-I aminoacyl-tRNA synthetase family. TyrS type 1 subfamily. In terms of assembly, homodimer.

Its subcellular location is the cytoplasm. It catalyses the reaction tRNA(Tyr) + L-tyrosine + ATP = L-tyrosyl-tRNA(Tyr) + AMP + diphosphate + H(+). In terms of biological role, catalyzes the attachment of tyrosine to tRNA(Tyr) in a two-step reaction: tyrosine is first activated by ATP to form Tyr-AMP and then transferred to the acceptor end of tRNA(Tyr). The protein is Tyrosine--tRNA ligase of Roseiflexus castenholzii (strain DSM 13941 / HLO8).